Reading from the N-terminus, the 169-residue chain is MSVLQVLHIPDERLRKVAKPVEEVNAEIQRIVDDMFETMYAEEGIGLAATQVDIHQRIIVIDVSENRDERLVLINPELLEKSGETGIEEGCLSIPEQRALVPRAEKVKIRALDRDGKPFELEADGLLAICIQHEMDHLVGKLFMDYLSPLKQQRIRQKVEKLDRLKARA.

Fe cation is bound by residues Cys91 and His133. Residue Glu134 is part of the active site. His137 lines the Fe cation pocket.

It belongs to the polypeptide deformylase family. Fe(2+) serves as cofactor.

The enzyme catalyses N-terminal N-formyl-L-methionyl-[peptide] + H2O = N-terminal L-methionyl-[peptide] + formate. Functionally, removes the formyl group from the N-terminal Met of newly synthesized proteins. Requires at least a dipeptide for an efficient rate of reaction. N-terminal L-methionine is a prerequisite for activity but the enzyme has broad specificity at other positions. This Escherichia coli (strain K12 / DH10B) protein is Peptide deformylase.